The primary structure comprises 74 residues: Defensin (74 aa).

The signal sequence occupies residues 1-22 (MRGLCICLVFLLVCGLVSATAA). Residues 23–36 (APAESEVAHLRVRR) constitute a propeptide that is removed on maturation. 3 disulfides stabilise this stretch: C40/C61, C47/C69, and C51/C71.

As to expression, hemolymph.

Its subcellular location is the secreted. Antibacterial activity against Gram-positive and Gram-negative bacteria. This is Defensin (VSNA1) from Dermacentor variabilis (American dog tick).